Here is a 670-residue protein sequence, read N- to C-terminus: Septation protein 7 (670 aa).

Positions 33 to 357 constitute a Septin-type G domain; that stretch reads KGIKFTFMVV…ETYRTERLTK (325 aa). Residues 43 to 50 are G1 motif; sequence GESGTGKT. GTP-binding positions include 43 to 50, Gly-137, 217 to 225, and Arg-306; these read GESGTGKT and KADSFTLNE. Residues 134 to 137 form a G3 motif region; that stretch reads DTPG. The interval 216–219 is G4 motif; that stretch reads GKAD. Disordered regions lie at residues 383–513 and 574–670; these read LNDS…QRNQ and LNRQ…VSNH. The span at 395–404 shows a compositional bias: low complexity; sequence NNNNNNNNNN. A compositionally biased stretch (polar residues) spans 405-421; the sequence is ASTIPSMSNLAQLTTST. Low complexity-rich tracts occupy residues 433–446 and 463–473; these read SITS…KSTS and SSFTSSTSTVS. Positions 472–606 form a coiled coil; that stretch reads VSLEGGEKEG…SVQSGGVDDG (135 aa). The span at 476–487 shows a compositional bias: basic and acidic residues; it reads GGEKEGGHHDRG. Over residues 489–500 the composition is skewed to low complexity; the sequence is NSTSTNNNNNNN. Residues 631-645 are compositionally biased toward basic and acidic residues; the sequence is QSHEYDNSEYHHDDS.

Belongs to the TRAFAC class TrmE-Era-EngA-EngB-Septin-like GTPase superfamily. Septin GTPase family. Component of the septin complex which consists of CDC3, CDC10, CDC11, CDC12 and probably SEP7. The purified septin complex appeared to have a stoichiometry of 2 CDC3, 1 to 2 CDC10, 1 CDC11, 2 CDC12, and 1 or none SEP7 subunit. Induction of hyphal growth brings about important modifications in septin ring dynamics, because the rings were found in a different state from those of yeast cells. This hyphal-specific state contains a core of stable septins (SEP7, CDC3, and CDC12), and it shows a high CDC10 turnover between the ring and the cytoplasm. Interacts with GIN4. Post-translationally, phosphorylated by GIN4 which stabilizes the GIN4-SEP7 interaction.

The protein resides in the bud neck. Its function is as follows. Septins are GTPases involved in cytokinesis that assemble early in the cell cycle as a patch at the incipient bud site and form a ring before bud emergence, which transforms into an hour-glass shaped collar of cortical filaments that spans both sides of the mother-bud neck. This collar persists until just before cytokinesis, when it splits into two rings that occupy opposite sides of the neck. The septins at the bud neck serve as a structural scaffold that recruits different components involved in diverse processes at specific stages during the cell cycle. Many proteins bind asymmetrically to the septin collar. The septin assembly is regulated by protein kinase GIN4. Septins are also involved in cell morphogenesis, chlamydospores morphogenesis, bud site selection, chitin deposition, cell cycle regulation, cell compartmentalization and spore wall formation. SEP7 is required to convert hyphal septin rings into the hyphal-specific state and is necessary for CDC10 turnover during hyphal growth. The polypeptide is Septation protein 7 (SEP7) (Candida albicans (strain SC5314 / ATCC MYA-2876) (Yeast)).